A 216-amino-acid chain; its full sequence is Adenylate kinase (216 aa).

10 to 15 is a binding site for ATP; sequence GSGKGT. Residues 30-59 form an NMP region; that stretch reads STGDMLRAAVKEGTPMGVKAKAKMDAGALV. Residues T31, R36, 57–59, 85–88, and Q92 contribute to the AMP site; these read ALV and GFPR. The LID stretch occupies residues 126–163; the sequence is GRRTCRDCGKMYHVEFDAPAVADKCDKCGGQLFQRDDD. Residue R127 participates in ATP binding. Residues C130, C133, C150, and C153 each contribute to the Zn(2+) site. AMP is bound by residues R160 and R171. K199 is an ATP binding site.

It belongs to the adenylate kinase family. In terms of assembly, monomer.

It localises to the cytoplasm. The enzyme catalyses AMP + ATP = 2 ADP. Its pathway is purine metabolism; AMP biosynthesis via salvage pathway; AMP from ADP: step 1/1. Functionally, catalyzes the reversible transfer of the terminal phosphate group between ATP and AMP. Plays an important role in cellular energy homeostasis and in adenine nucleotide metabolism. The protein is Adenylate kinase of Syntrophotalea carbinolica (strain DSM 2380 / NBRC 103641 / GraBd1) (Pelobacter carbinolicus).